The sequence spans 256 residues: Imidazole glycerol phosphate synthase subunit HisF (256 aa).

Residues Asp11 and Asp130 contribute to the active site.

It belongs to the HisA/HisF family. In terms of assembly, heterodimer of HisH and HisF.

It localises to the cytoplasm. It catalyses the reaction 5-[(5-phospho-1-deoxy-D-ribulos-1-ylimino)methylamino]-1-(5-phospho-beta-D-ribosyl)imidazole-4-carboxamide + L-glutamine = D-erythro-1-(imidazol-4-yl)glycerol 3-phosphate + 5-amino-1-(5-phospho-beta-D-ribosyl)imidazole-4-carboxamide + L-glutamate + H(+). The protein operates within amino-acid biosynthesis; L-histidine biosynthesis; L-histidine from 5-phospho-alpha-D-ribose 1-diphosphate: step 5/9. Functionally, IGPS catalyzes the conversion of PRFAR and glutamine to IGP, AICAR and glutamate. The HisF subunit catalyzes the cyclization activity that produces IGP and AICAR from PRFAR using the ammonia provided by the HisH subunit. In Psychrobacter sp. (strain PRwf-1), this protein is Imidazole glycerol phosphate synthase subunit HisF.